Reading from the N-terminus, the 387-residue chain is EARP-interacting protein homolog (387 aa).

4 WD repeats span residues 132–172 (SAHG…AKAT), 182–222 (KGQL…QIYC), 226–266 (AHGQ…EPVK), and 270–310 (EHSH…SEPF). The disordered stretch occupies residues 309 to 337 (PFGHLVDDDDLSDPEENQQEDKGKEPLQD). Residues 315 to 326 (DDDDLSDPEENQ) show a composition bias toward acidic residues. The WD 5 repeat unit spans residues 345–385 (EHEDSVYAVEWSAADPWLFASLSYDGRLVINRVPRALKYRI).

Belongs to the WD repeat EIPR1 family.

Its subcellular location is the golgi apparatus. The protein localises to the trans-Golgi network. Functionally, may act as a component of endosomal retrieval machinery that is involved in protein transport from early endosomes to either recycling endosomes or the trans-Golgi network. In Danio rerio (Zebrafish), this protein is EARP-interacting protein homolog.